We begin with the raw amino-acid sequence, 129 residues long: DNA-directed RNA polymerase subunit omega (129 aa).

Residues E76–D100 are disordered.

Belongs to the RNA polymerase subunit omega family. As to quaternary structure, the RNAP catalytic core consists of 2 alpha, 1 beta, 1 beta' and 1 omega subunit. When a sigma factor is associated with the core the holoenzyme is formed, which can initiate transcription.

The enzyme catalyses RNA(n) + a ribonucleoside 5'-triphosphate = RNA(n+1) + diphosphate. Functionally, promotes RNA polymerase assembly. Latches the N- and C-terminal regions of the beta' subunit thereby facilitating its interaction with the beta and alpha subunits. The polypeptide is DNA-directed RNA polymerase subunit omega (Xanthobacter autotrophicus (strain ATCC BAA-1158 / Py2)).